A 134-amino-acid polypeptide reads, in one-letter code: Rubredoxin-2 (134 aa).

One can recognise a Rubredoxin-like domain in the interval 1–53 (MAKYQCPDCQYIYDECKGEPHEGFQPNTNWGEIPEEWACPDCAVRDKIDFKML). The Fe cation site is built by cysteine 6, cysteine 9, cysteine 39, and cysteine 42. Basic and acidic residues predominate over residues 99–116 (SITDERENTPDNKVERRS). The tract at residues 99 to 134 (SITDERENTPDNKVERRSQSQAVRRSSVKKIKNNKR) is disordered. Over residues 124–134 (SSVKKIKNNKR) the composition is skewed to basic residues.

The protein belongs to the rubredoxin family. Fe(3+) is required as a cofactor.

The protein localises to the cytoplasm. It functions in the pathway hydrocarbon metabolism; alkane degradation. Functionally, involved in the hydrocarbon hydroxylating system, which transfers electrons from NADH to rubredoxin reductase and then through rubredoxin to alkane 1 monooxygenase. This is Rubredoxin-2 (alkF) from Pseudomonas putida (Arthrobacter siderocapsulatus).